The chain runs to 1195 residues: DNA-directed RNA polymerase subunit Rpo2 (1195 aa).

Residues Leu894–Ser909 are compositionally biased toward basic and acidic residues. Positions Leu894–Arg914 are disordered. The Zn(2+) site is built by Cys1135, Cys1140, Cys1155, and Cys1158.

It belongs to the RNA polymerase beta chain family. As to quaternary structure, part of the RNA polymerase complex. Zn(2+) serves as cofactor.

Its subcellular location is the cytoplasm. The enzyme catalyses RNA(n) + a ribonucleoside 5'-triphosphate = RNA(n+1) + diphosphate. Its function is as follows. DNA-dependent RNA polymerase (RNAP) catalyzes the transcription of DNA into RNA using the four ribonucleoside triphosphates as substrates. This subunit is involved in DNA promoter recognition. This Thermoplasma acidophilum (strain ATCC 25905 / DSM 1728 / JCM 9062 / NBRC 15155 / AMRC-C165) protein is DNA-directed RNA polymerase subunit Rpo2.